The following is a 210-amino-acid chain: Actin-related protein 3C (210 aa).

Positions 1–21 (MFESFNVPGLYIAVQAVLALA) are cleaved as a signal peptide.

The protein belongs to the actin family. In terms of tissue distribution, expressed in kidney, stomach, spleen, bone marrow, uterus, testis, placenta, skeletal muscle, mammary gland, lung, fetal liver, and fetal kidney, but not detected in small intestine, brain, and thymus. Expressed in low-metastatic lung adenocarcinoma cells but not in high-metastatic ones.

Functionally, may play a role in the suppression of metastatic potential in lung adenoma carcinoma cells. The chain is Actin-related protein 3C (ACTR3C) from Homo sapiens (Human).